A 749-amino-acid chain; its full sequence is Meiotically up-regulated gene 122 protein (749 aa).

Topologically, residues 1–20 are cytoplasmic; that stretch reads MYRKWDLCITRHLLPYIEHS. The helical; Signal-anchor for type II membrane protein transmembrane segment at 21-41 threads the bilayer; sequence VIPIIALLVLSLIFYILYICF. Topologically, residues 42-749 are lumenal; it reads GTTSYILSGI…LLSNALRSII (708 aa). Residues 88–261 enclose the PXA domain; it reads PPELEAPLQL…CIILYFSSSE (174 aa). The 112-residue stretch at 311 to 422 folds into the PX domain; it reads LHYQFLKEAS…KFFAKSMRSH (112 aa). Disordered stretches follow at residues 439 to 489 and 504 to 546; these read QSSS…LSQQ and GSCT…PPKP. Composition is skewed to polar residues over residues 440–461 and 475–489; these read SSSVPTLPNLTNISRVLSNKTS and LSHQSTLAPEPLSQQ.

It belongs to the sorting nexin family.

It localises to the endoplasmic reticulum membrane. Functionally, has a role in meiosis. The chain is Meiotically up-regulated gene 122 protein (mug122) from Schizosaccharomyces pombe (strain 972 / ATCC 24843) (Fission yeast).